Here is a 620-residue protein sequence, read N- to C-terminus: MFEIAKGISNSLAKKSVGAKVDGKNVDMSYILDHDAEVEFIDIDSPEGEDIVRHSTAHLMAQAVLRLYPDTKVTIGPVIENGFYYDFDPVEQFTEEDLEKIEAEMKRIVKENIKLEKYVLPRDEAIEYFRDVDKNKYKVEVVEGIPQGEQVSFYKQGDFTDLCRGTHVPSTGYLKAFKLRTVAGAYWRGNSKNKMLQRIYGYSFSNEERLKHHLKLMEEAEKRDHRKLGKELELFFLSEYGPGFPFFLPKGMIVRNVLIDLWRREHEKAGYQQLETPIMLNKELWEISGHWFNYRENMYTSEIDELEFAIKPMNCPGGVLAFKHQLHSYKDLPARLAELGRVHRHEFSGALHGLMRVRSFTQDDSHIFMTPDQVQDEIIGVVNLIDKFYSKLFGFEYEIELSTKPEKAIGSQEIWDMAEAALAGALDKLGRKYKINPGDGAFYGPKLDFKIKDAIGRMWQCGTIQLDFNLPERFDVTYIGEDGEKHRPVMLHRVIYGSIERFIGILIEHYAGAFPMWLAPVQVKVLTLNDECIPYAKEIMNKLEELGIRAELDDRNETIGYKIREANGKYKIPMQLIIGKNEVENKEVNIRRFGSKDQFSKLLDEFYTYVVDEATIKFDK.

Positions 1 to 42 constitute a TGS domain; sequence MFEIAKGISNSLAKKSVGAKVDGKNVDMSYILDHDAEVEFID. A catalytic region spans residues 224 to 515; that stretch reads DHRKLGKELE…LIEHYAGAFP (292 aa). Residues cysteine 315, histidine 366, and histidine 492 each coordinate Zn(2+).

Belongs to the class-II aminoacyl-tRNA synthetase family. In terms of assembly, homodimer. The cofactor is Zn(2+).

The protein localises to the cytoplasm. The catalysed reaction is tRNA(Thr) + L-threonine + ATP = L-threonyl-tRNA(Thr) + AMP + diphosphate + H(+). Catalyzes the attachment of threonine to tRNA(Thr) in a two-step reaction: L-threonine is first activated by ATP to form Thr-AMP and then transferred to the acceptor end of tRNA(Thr). Also edits incorrectly charged L-seryl-tRNA(Thr). This is Threonine--tRNA ligase from Fusobacterium nucleatum subsp. nucleatum (strain ATCC 25586 / DSM 15643 / BCRC 10681 / CIP 101130 / JCM 8532 / KCTC 2640 / LMG 13131 / VPI 4355).